Here is a 121-residue protein sequence, read N- to C-terminus: Small ribosomal subunit protein uS13 (121 aa).

Positions valine 97 to lysine 121 are disordered. Basic residues predominate over residues glutamine 100–lysine 121.

Belongs to the universal ribosomal protein uS13 family. Part of the 30S ribosomal subunit. Forms a loose heterodimer with protein S19. Forms two bridges to the 50S subunit in the 70S ribosome.

Its function is as follows. Located at the top of the head of the 30S subunit, it contacts several helices of the 16S rRNA. In the 70S ribosome it contacts the 23S rRNA (bridge B1a) and protein L5 of the 50S subunit (bridge B1b), connecting the 2 subunits; these bridges are implicated in subunit movement. Contacts the tRNAs in the A and P-sites. The polypeptide is Small ribosomal subunit protein uS13 (Prochlorococcus marinus (strain MIT 9313)).